A 187-amino-acid chain; its full sequence is dCTP deaminase (187 aa).

Residues 107–112, 131–133, Q152, Y166, K175, and Q176 each bind dCTP; these read KSTYAR and TLE. The active-site Proton donor/acceptor is E133.

The protein belongs to the dCTP deaminase family. Homotrimer.

The enzyme catalyses dCTP + H2O + H(+) = dUTP + NH4(+). Its pathway is pyrimidine metabolism; dUMP biosynthesis; dUMP from dCTP (dUTP route): step 1/2. Functionally, catalyzes the deamination of dCTP to dUTP. The protein is dCTP deaminase of Ehrlichia canis (strain Jake).